The primary structure comprises 239 residues: Ribosomal RNA small subunit methyltransferase G (239 aa).

S-adenosyl-L-methionine is bound by residues glycine 78, phenylalanine 83, 129–130 (AE), and arginine 148.

It belongs to the methyltransferase superfamily. RNA methyltransferase RsmG family.

It is found in the cytoplasm. In terms of biological role, specifically methylates the N7 position of a guanine in 16S rRNA. The polypeptide is Ribosomal RNA small subunit methyltransferase G (Clostridium botulinum (strain Kyoto / Type A2)).